The following is a 138-amino-acid chain: MNTIHVDVVSAEESIFSGEARFVALPGESGELGIFPRHTPLITRIKPGSVRIEMADGSEEFVFVAGGILEVQPNCVTVLSDTAIRGADLDAEKAEKAKLEAEEALKNAKSEVDLARAQSELAVMAAQIAALRKFRQKR.

It belongs to the ATPase epsilon chain family. As to quaternary structure, F-type ATPases have 2 components, CF(1) - the catalytic core - and CF(0) - the membrane proton channel. CF(1) has five subunits: alpha(3), beta(3), gamma(1), delta(1), epsilon(1). CF(0) has three main subunits: a, b and c.

The protein resides in the cell inner membrane. In terms of biological role, produces ATP from ADP in the presence of a proton gradient across the membrane. The polypeptide is ATP synthase epsilon chain (Delftia acidovorans (strain DSM 14801 / SPH-1)).